The primary structure comprises 205 residues: UPF0316 protein Cthe_2213 (205 aa).

3 helical membrane-spanning segments follow: residues 15–37, 44–64, and 70–90; these read LPLLIFFSRIIDVTIGTIRIIFV, LAPVLGFFEVLVWIMAISQIM, and FVCYFAYAAGFATGTFVGIII.

The protein belongs to the UPF0316 family.

It localises to the cell membrane. The polypeptide is UPF0316 protein Cthe_2213 (Acetivibrio thermocellus (strain ATCC 27405 / DSM 1237 / JCM 9322 / NBRC 103400 / NCIMB 10682 / NRRL B-4536 / VPI 7372) (Clostridium thermocellum)).